Consider the following 371-residue polypeptide: Queuine tRNA-ribosyltransferase (371 aa).

Catalysis depends on aspartate 90, which acts as the Nucleophile. The active-site Proton acceptor is aspartate 90. Substrate-binding positions include aspartate 90–phenylalanine 94, serine 91, aspartate 144, glutamine 189, and glycine 215. Residues glycine 246 to asparagine 252 are RNA binding. Aspartate 265 (nucleophile) is an active-site residue. Positions threonine 270–arginine 274 are RNA binding; important for wobble base 34 recognition. Residues cysteine 303, cysteine 305, cysteine 308, and histidine 334 each contribute to the Zn(2+) site.

The protein belongs to the queuine tRNA-ribosyltransferase family. As to quaternary structure, homodimer. Within each dimer, one monomer is responsible for RNA recognition and catalysis, while the other monomer binds to the replacement base PreQ1. Requires Zn(2+) as cofactor.

The enzyme catalyses 7-aminomethyl-7-carbaguanine + guanosine(34) in tRNA = 7-aminomethyl-7-carbaguanosine(34) in tRNA + guanine. Its pathway is tRNA modification; tRNA-queuosine biosynthesis. Functionally, catalyzes the base-exchange of a guanine (G) residue with the queuine precursor 7-aminomethyl-7-deazaguanine (PreQ1) at position 34 (anticodon wobble position) in tRNAs with GU(N) anticodons (tRNA-Asp, -Asn, -His and -Tyr). Catalysis occurs through a double-displacement mechanism. The nucleophile active site attacks the C1' of nucleotide 34 to detach the guanine base from the RNA, forming a covalent enzyme-RNA intermediate. The proton acceptor active site deprotonates the incoming PreQ1, allowing a nucleophilic attack on the C1' of the ribose to form the product. After dissociation, two additional enzymatic reactions on the tRNA convert PreQ1 to queuine (Q), resulting in the hypermodified nucleoside queuosine (7-(((4,5-cis-dihydroxy-2-cyclopenten-1-yl)amino)methyl)-7-deazaguanosine). The protein is Queuine tRNA-ribosyltransferase of Helicobacter pylori (strain ATCC 700392 / 26695) (Campylobacter pylori).